The primary structure comprises 209 residues: Ubiquitin-conjugating enzyme E2 S (209 aa).

A UBC core domain is found at 14–160 (QTIRQVMREL…ARMMTEIHAQ (147 aa)). The active-site Glycyl thioester intermediate is the C98. The segment at 168–194 (AVGDAKDDGGPSTKKHAGLDKKLQDKK) is disordered. The segment covering 184–194 (AGLDKKLQDKK) has biased composition (basic and acidic residues).

This sequence belongs to the ubiquitin-conjugating enzyme family.

It carries out the reaction S-ubiquitinyl-[E1 ubiquitin-activating enzyme]-L-cysteine + [E2 ubiquitin-conjugating enzyme]-L-cysteine = [E1 ubiquitin-activating enzyme]-L-cysteine + S-ubiquitinyl-[E2 ubiquitin-conjugating enzyme]-L-cysteine.. The protein operates within protein modification; protein ubiquitination. Catalyzes the covalent attachment of ubiquitin to other proteins. Acts as an essential factor of the anaphase promoting complex/cyclosome (APC/C), a cell cycle-regulated ubiquitin ligase that controls progression through mitosis. Acts by specifically elongating polyubiquitin chains initiated by the E2 enzyme vih/UbcH10 on APC/C substrates, enhancing the degradation of APC/C substrates by the proteasome and promoting mitotic exit. This is Ubiquitin-conjugating enzyme E2 S from Drosophila melanogaster (Fruit fly).